The chain runs to 375 residues: Actin-binding Rho-activating protein (375 aa).

2 stretches are compositionally biased toward basic and acidic residues: residues 1–11 (MAPGEREREAG) and 79–99 (KPDR…SHIK). Disordered regions lie at residues 1 to 20 (MAPG…LRKV) and 38 to 99 (NENS…SHIK). 2 positions are modified to phosphoserine: Ser-150 and Ser-182. Residues 173 to 182 (QEEPTWKSDS) show a composition bias toward basic and acidic residues. Residues 173–204 (QEEPTWKSDSVDTEDSGYGGDMEERPEQDAAP) are disordered. Actin-binding regions lie at residues 193 to 293 (DMEE…AERA) and 294 to 375 (KRAE…TLLE). 2 interaction with actin regions span residues 234–279 (SQVD…GDEG) and 346–375 (MRAR…TLLE).

In terms of assembly, binds F-actin and ABLIM1, ABLIM2 and ABLIM3. Interaction with ABLIM2 and ABLIM3 enhances activity. Expressed specifically in heart and skeletal muscle.

The protein localises to the cytoplasm. It localises to the myofibril. Its subcellular location is the sarcomere. It is found in the cytoskeleton. Acts as an activator of serum response factor (SRF)-dependent transcription possibly by inducing nuclear translocation of MKL1 or MKL2 and through a mechanism requiring Rho-actin signaling. This Mus musculus (Mouse) protein is Actin-binding Rho-activating protein.